Consider the following 158-residue polypeptide: NKG2-F type II integral membrane protein (158 aa).

The segment covering 1–12 (MNKQRGTYSEVS) has biased composition (polar residues). Residues 1 to 30 (MNKQRGTYSEVSLAQDPKRQQRKLKGNKSS) are disordered. Topologically, residues 1–74 (MNKQRGTYSE…LPPPERLTAE (74 aa)) are cytoplasmic. The helical transmembrane segment at 75–95 (VLGIICIVLMATVLKTIVLIP) threads the bilayer. The Extracellular portion of the chain corresponds to 96–158 (CIGVLEQNNF…VLQRTLICFL (63 aa)).

Can form disulfide-bonded heterodimer with CD94. Natural killer cells.

It localises to the membrane. May play a role as a receptor for the recognition of MHC class I HLA-E molecules by NK cells. This chain is NKG2-F type II integral membrane protein (KLRC4), found in Pan troglodytes (Chimpanzee).